Reading from the N-terminus, the 301-residue chain is Cutinase (301 aa).

A signal peptide spans 1-40 (MAVMTPRRERSSLLSRALQVTAAAATALVTAVSLAAPAHA). Position 100 (Tyr-100) interacts with poly(ethylene terephthalate). Ser-170 functions as the Nucleophile in the catalytic mechanism. 2 residues coordinate poly(ethylene terephthalate): Met-171 and Trp-195. Active-site charge relay system residues include Asp-216 and His-248. Cys-281 and Cys-299 are disulfide-bonded.

Belongs to the AB hydrolase superfamily.

The protein localises to the secreted. Its subcellular location is the periplasm. It catalyses the reaction a butanoate ester + H2O = an aliphatic alcohol + butanoate + H(+). The catalysed reaction is (ethylene terephthalate)(n) + H2O = (ethylene terephthalate)(n-1) + 4-[(2-hydroxyethoxy)carbonyl]benzoate + H(+). It carries out the reaction cutin + H2O = cutin monomers.. Its activity is regulated as follows. Activated by magnesium ions. Activated by calcium ions. Inhibited by the serine hydrolase inhibitor phenylmethanesulfonyl fluoride (PMSF). Functionally, catalyzes the hydrolysis of cutin, a polyester that forms the structure of plant cuticle. Shows esterase activity towards p-nitrophenol-linked aliphatic esters (pNP-aliphatic esters). Also hydrolyzes the triglyceride triolein. Capable of degrading the plastic poly(ethylene terephthalate) (PET), the most abundant polyester plastic in the world. The polypeptide is Cutinase (Thermobifida fusca (strain YX)).